The primary structure comprises 232 residues: Phosphatidylserine decarboxylase proenzyme (232 aa).

Serine 190 functions as the Schiff-base intermediate with substrate; via pyruvic acid in the catalytic mechanism. Position 190 is a pyruvic acid (Ser); by autocatalysis (serine 190).

This sequence belongs to the phosphatidylserine decarboxylase family. PSD-A subfamily. Heterodimer of a large membrane-associated beta subunit and a small pyruvoyl-containing alpha subunit. Requires pyruvate as cofactor. Post-translationally, is synthesized initially as an inactive proenzyme. Formation of the active enzyme involves a self-maturation process in which the active site pyruvoyl group is generated from an internal serine residue via an autocatalytic post-translational modification. Two non-identical subunits are generated from the proenzyme in this reaction, and the pyruvate is formed at the N-terminus of the alpha chain, which is derived from the carboxyl end of the proenzyme. The post-translation cleavage follows an unusual pathway, termed non-hydrolytic serinolysis, in which the side chain hydroxyl group of the serine supplies its oxygen atom to form the C-terminus of the beta chain, while the remainder of the serine residue undergoes an oxidative deamination to produce ammonia and the pyruvoyl prosthetic group on the alpha chain.

It is found in the cell membrane. The enzyme catalyses a 1,2-diacyl-sn-glycero-3-phospho-L-serine + H(+) = a 1,2-diacyl-sn-glycero-3-phosphoethanolamine + CO2. It participates in phospholipid metabolism; phosphatidylethanolamine biosynthesis; phosphatidylethanolamine from CDP-diacylglycerol: step 2/2. In terms of biological role, catalyzes the formation of phosphatidylethanolamine (PtdEtn) from phosphatidylserine (PtdSer). The chain is Phosphatidylserine decarboxylase proenzyme from Allorhizobium ampelinum (strain ATCC BAA-846 / DSM 112012 / S4) (Agrobacterium vitis (strain S4)).